Reading from the N-terminus, the 366-residue chain is MAGPRVEVDGSIMEGGGQILRVSTALSCLLGLPLRVQKIRAGRSTPGLRPQHLSGLEMIRDLCDGRLEGAEIGSTEITFTPEKIKGGIHTADTKTAGSVCLLMQVSMPCVLFAASPSELHLKGGTNAEMAPQIDYTVMVFKPIVEKFGFRFNCDIKTRGYYPKGGGEVIVRMSPVKQLNPINLTDRGCVTKIYGRAFVAGVLPFKVAKDMAAAAVRCIRKEIRDLYVNIQPVQEPKDQAFGNGNGIIIIAETSTGCLFAGSSLGKRGVNADKVGIEAAEMLLANLRHGGTVDEYLQDQLIVFMALANGVSRIKTGPVTLHTQTAIHFAEQIAKAKFIVKKSEDEEDASKDTYIIECQGIGMTNPNL.

Positions 104, 131, 294, 297, 298, and 320 each coordinate ATP. The active-site Tele-AMP-histidine intermediate is histidine 320.

It belongs to the RNA 3'-terminal cyclase family. Type 1 subfamily.

Its subcellular location is the nucleus. The protein resides in the nucleoplasm. The catalysed reaction is a 3'-end 3'-phospho-ribonucleotide-RNA + ATP = a 3'-end 2',3'-cyclophospho-ribonucleotide-RNA + AMP + diphosphate. Its function is as follows. Catalyzes the conversion of 3'-phosphate to a 2',3'-cyclic phosphodiester at the end of RNA. The mechanism of action of the enzyme occurs in 3 steps: (A) adenylation of the enzyme by ATP; (B) transfer of adenylate to an RNA-N3'P to produce RNA-N3'PP5'A; (C) and attack of the adjacent 2'-hydroxyl on the 3'-phosphorus in the diester linkage to produce the cyclic end product. Likely functions in some aspects of cellular RNA processing. Function plays an important role in regulating axon regeneration by inhibiting central nervous system (CNS) axon regeneration following optic nerve injury. The protein is RNA 3'-terminal phosphate cyclase (RTCA) of Macaca fascicularis (Crab-eating macaque).